A 977-amino-acid polypeptide reads, in one-letter code: Serine/threonine-protein kinase/endoribonuclease IRE1 (977 aa).

The signal sequence occupies residues M1–G20. The Lumenal portion of the chain corresponds to S21–D445. N-linked (GlcNAc...) asparagine glycosylation occurs at N178. Residues M446–Y466 traverse the membrane as a helical segment. At P467–L977 the chain is on the cytoplasmic side. The interval F498–E559 is disordered. Low complexity predominate over residues S513 to S551. Residues F571–F832 form the Protein kinase domain. ATP is bound by residues L577–I585, K599, and E643–C645. D688 functions as the Proton acceptor; for protein kinase activity in the catalytic mechanism. ATP contacts are provided by residues K690 to N693 and D711. S724 and S729 each carry phosphoserine. A KEN domain is found at L835–H963. Positions N906–K907 are interacts with hydroxy-aryl-aldehyde inhibitors.

The protein belongs to the protein kinase superfamily. Ser/Thr protein kinase family. Monomer. Homodimer; disulfide-linked; homodimerization takes place in response to endoplasmic reticulum stress and promotes activation of the kinase and endoribonuclease activities. Dimer formation is driven by hydrophobic interactions within the N-terminal luminal domains and stabilized by disulfide bridges. Interacts (via the luminal region) with DNAJB9/ERdj4; interaction takes place in unstressed cells and promotes recruitment of HSPA5/BiP. Interacts (via the luminal region) with HSPA5/BiP; HSPA5/BiP is a negative regulator of the unfolded protein response (UPR) that prevents homodimerization of ERN1/IRE1 and subsequent activation of the protein. Interaction with HSPA5 also competitively inhibits ERN1 interaction with MANF. Interacts with PDIA6, a negative regulator of the UPR; the interaction is direct and disrupts homodimerization. Interacts with DAB2IP (via PH domain); the interaction occurs in a endoplasmic reticulum stress-induced dependent manner and is required for subsequent recruitment of TRAF2 to ERN1/IRE1. Interacts with TAOK3 and TRAF2. Interacts with RNF13. Interacts with LACC1. Interacts (when unphosphorylated) with DDRGK1; interaction is dependent on UFM1 and takes place in response to endoplasmic reticulum stress, regulating ERN1/IRE1-alpha stability. Interacts (via N-terminus) with P4HB/PDIA1; the interaction is enhanced by phosphorylation of P4HB by FAM20C in response to endoplasmic reticulum stress and results in attenuation of ERN1 activity. Interacts with TMBIM6; this interaction inhibits ERN1 activity. Interacts (via luminal domain) with MANF (via C-terminus); the interaction is decreased in the presence of increasing concentrations of Ca(2+). The cofactor is Mg(2+). Autophosphorylated following homodimerization. Autophosphorylation promotes activation of the endoribonuclease domain. In response to ER stress, phosphorylated at Ser-724, Ser-729 and possibly Ser-726; phosphorylation promotes oligomerization and endoribonuclease activity. Dephosphorylated at Ser-724, Ser-729 and possibly Ser-726 by RPAP2 to abort failed ER-stress adaptation and trigger apoptosis. Phosphorylated at Ser-724; in response to the ER stressor tunicamycin. Post-translationally, ADP-ribosylated by PARP16 upon ER stress, which increases both kinase and endonuclease activities. Expressed in liver (at protein level). Ubiquitously expressed. High levels in thymus, liver and lung. In the brain, preferentially expressed in cortical, hippocampal and olfactory neurons.

Its subcellular location is the endoplasmic reticulum membrane. The catalysed reaction is L-seryl-[protein] + ATP = O-phospho-L-seryl-[protein] + ADP + H(+). It carries out the reaction L-threonyl-[protein] + ATP = O-phospho-L-threonyl-[protein] + ADP + H(+). Its activity is regulated as follows. The kinase domain is activated by trans-autophosphorylation following homodimerization. Kinase activity is required for activation of the endoribonuclease domain. Endoribonuclease activity is specifically inhibited by hydroxy-aryl-aldehydes (HAA) MKC9989, OICR464 and OICR573. Serine/threonine-protein kinase and endoribonuclease that acts as a key sensor for the endoplasmic reticulum unfolded protein response (UPR). In unstressed cells, the endoplasmic reticulum luminal domain is maintained in its inactive monomeric state by binding to the endoplasmic reticulum chaperone HSPA5/BiP. Accumulation of misfolded protein in the endoplasmic reticulum causes release of HSPA5/BiP, allowing the luminal domain to homodimerize, promoting autophosphorylation of the kinase domain and subsequent activation of the endoribonuclease activity. The endoribonuclease activity is specific for XBP1 mRNA and excises 26 nucleotides from XBP1 mRNA. The resulting spliced transcript of XBP1 encodes a transcriptional activator protein that up-regulates expression of UPR target genes. Acts as an upstream signal for ER stress-induced GORASP2-mediated unconventional (ER/Golgi-independent) trafficking of CFTR to cell membrane by modulating the expression and localization of SEC16A. This is Serine/threonine-protein kinase/endoribonuclease IRE1 from Mus musculus (Mouse).